Here is a 118-residue protein sequence, read N- to C-terminus: Large ribosomal subunit protein bL19 (118 aa).

This sequence belongs to the bacterial ribosomal protein bL19 family.

Functionally, this protein is located at the 30S-50S ribosomal subunit interface and may play a role in the structure and function of the aminoacyl-tRNA binding site. The chain is Large ribosomal subunit protein bL19 from Levilactobacillus brevis (strain ATCC 367 / BCRC 12310 / CIP 105137 / JCM 1170 / LMG 11437 / NCIMB 947 / NCTC 947) (Lactobacillus brevis).